A 20-amino-acid chain; its full sequence is Snaclec ophioluxin subunit alpha (20 aa).

Cys-4 and Cys-15 are disulfide-bonded. The 10-residue stretch at 11-20 (YDQHCYRIIN) folds into the C-type lectin domain.

It belongs to the snaclec family. Heterodimer of subunits alpha and beta; disulfide-linked. In terms of tissue distribution, expressed by the venom gland.

It localises to the secreted. Binds to the platelet and collagen receptor glycoprotein VI (GP6) and activates platelet aggregation. This Ophiophagus hannah (King cobra) protein is Snaclec ophioluxin subunit alpha.